We begin with the raw amino-acid sequence, 365 residues long: 5-hydroxytryptamine receptor 1E (365 aa).

The Extracellular segment spans residues Met1–Lys22. 2 N-linked (GlcNAc...) asparagine glycosylation sites follow: Asn2 and Asn5. Residues Met23–Ile47 form a helical membrane-spanning segment. Residues Cys48–Tyr59 lie on the Cytoplasmic side of the membrane. A helical membrane pass occupies residues Leu60–Tyr82. Residues Ile83–Glu96 are Extracellular-facing. An intrachain disulfide couples Cys95 to Cys173. The chain crosses the membrane as a helical span at residues Val97 to Leu118. Ergotamine is bound by residues Asp102 and Thr107. Residues Asp119–Tyr121 carry the DRY motif; important for ligand-induced conformation changes motif. Topologically, residues Asp119–Arg138 are cytoplasmic. Residues Ala139–Trp160 form a helical membrane-spanning segment. Residues Arg161–His179 lie on the Extracellular side of the membrane. Ile175 is an ergotamine binding site. Residues Val180–Tyr202 traverse the membrane as a helical segment. The Cytoplasmic segment spans residues Tyr203–Arg291. A helical transmembrane segment spans residues Ile292–Val314. The Extracellular portion of the chain corresponds to Gly315–Glu324. Residues Val325–Phe347 form a helical membrane-spanning segment. The NPxxY motif; important for ligand-induced conformation changes and signaling signature appears at Asn340–Tyr344. Residues Asn348–Thr365 are Cytoplasmic-facing.

It belongs to the G-protein coupled receptor 1 family. In terms of tissue distribution, detected in the brain with the greatest abundance in the hippocampus, followed by the olfactory bulb. Lower levels are detected in the cortex, thalamus, pons, hypothalamus, midbrain, striatum, and cerebellum.

The protein localises to the cell membrane. Its function is as follows. G-protein coupled receptor for 5-hydroxytryptamine (serotonin). Also functions as a receptor for various alkaloids and psychoactive substances. Ligand binding causes a conformation change that triggers signaling via guanine nucleotide-binding proteins (G proteins) and modulates the activity of down-stream effectors, such as adenylate cyclase. Signaling inhibits adenylate cyclase activity. The sequence is that of 5-hydroxytryptamine receptor 1E (5HT1E) from Cavia porcellus (Guinea pig).